The following is a 138-amino-acid chain: Cysteine desulfuration protein SufE (138 aa).

Residue Cys-51 is the Cysteine persulfide intermediate of the active site.

This sequence belongs to the SufE family. In terms of assembly, homodimer. Interacts with SufS.

It localises to the cytoplasm. It functions in the pathway cofactor biosynthesis; iron-sulfur cluster biosynthesis. Functionally, participates in cysteine desulfuration mediated by SufS. Cysteine desulfuration mobilizes sulfur from L-cysteine to yield L-alanine and constitutes an essential step in sulfur metabolism for biosynthesis of a variety of sulfur-containing biomolecules. Functions as a sulfur acceptor for SufS, by mediating the direct transfer of the sulfur atom from the S-sulfanylcysteine of SufS, an intermediate product of cysteine desulfuration process. The sequence is that of Cysteine desulfuration protein SufE from Escherichia fergusonii (strain ATCC 35469 / DSM 13698 / CCUG 18766 / IAM 14443 / JCM 21226 / LMG 7866 / NBRC 102419 / NCTC 12128 / CDC 0568-73).